Here is a 123-residue protein sequence, read N- to C-terminus: Large ribosomal subunit protein bL12 (123 aa).

Belongs to the bacterial ribosomal protein bL12 family. In terms of assembly, homodimer. Part of the ribosomal stalk of the 50S ribosomal subunit. Forms a multimeric L10(L12)X complex, where L10 forms an elongated spine to which 2 to 4 L12 dimers bind in a sequential fashion. Binds GTP-bound translation factors.

In terms of biological role, forms part of the ribosomal stalk which helps the ribosome interact with GTP-bound translation factors. Is thus essential for accurate translation. In Rhodopseudomonas palustris (strain BisA53), this protein is Large ribosomal subunit protein bL12.